Here is an 883-residue protein sequence, read N- to C-terminus: Alanine--tRNA ligase (883 aa).

Zn(2+)-binding residues include His-560, His-564, Cys-665, and His-669.

It belongs to the class-II aminoacyl-tRNA synthetase family. It depends on Zn(2+) as a cofactor.

It is found in the cytoplasm. It carries out the reaction tRNA(Ala) + L-alanine + ATP = L-alanyl-tRNA(Ala) + AMP + diphosphate. In terms of biological role, catalyzes the attachment of alanine to tRNA(Ala) in a two-step reaction: alanine is first activated by ATP to form Ala-AMP and then transferred to the acceptor end of tRNA(Ala). Also edits incorrectly charged Ser-tRNA(Ala) and Gly-tRNA(Ala) via its editing domain. This Mesomycoplasma hyopneumoniae (strain 7448) (Mycoplasma hyopneumoniae) protein is Alanine--tRNA ligase.